The chain runs to 535 residues: uncharacterized protein (535 aa).

Residues 17–37 form a helical membrane-spanning segment; the sequence is IVLLCMIGFFCTTFMRIHFAL. N-linked (GlcNAc...) asparagine glycosylation is found at asparagine 44 and asparagine 61. The next 6 helical transmembrane spans lie at 107 to 127, 144 to 164, 167 to 187, 199 to 219, 225 to 245, and 292 to 312; these read LIFS…MFFI, ILVT…SVFL, IGMG…IGNW, IFTL…AAVC, WPAT…LWFF, and AFLG…LFQI. N-linked (GlcNAc...) asparagine glycosylation is present at asparagine 329. 5 helical membrane-spanning segments follow: residues 331-351, 368-388, 395-415, 429-451, and 463-483; these read TFTA…GIGI, VSHG…AFFV, TGLI…SGFY, MSAI…MSMF, and IFIG…LFGS.

The protein belongs to the major facilitator superfamily. Sodium/anion cotransporter family.

The protein resides in the membrane. This is an uncharacterized protein from Caenorhabditis elegans.